The primary structure comprises 206 residues: MTDTPTKQEIQSKNDNVPGATPVEQKKNNRNDRKRNRRGDSKNLERDSDWQERVVQIRRVSKTVKGGKKMSFRAIVVVGNEKGQVGVGVGKAGDVIGAVRKGVSDGKKNLVRVPLTPNNSIPTLSLGRDGAANVLIRPAAPGTGVIAGGSIRTVLELAGIKNVLAKRLGSKTPLNNARAAMVALSQLRTHKSASKERGISLEQLYS.

The span at 1–15 shows a compositional bias: polar residues; that stretch reads MTDTPTKQEIQSKND. The interval 1–50 is disordered; the sequence is MTDTPTKQEIQSKNDNVPGATPVEQKKNNRNDRKRNRRGDSKNLERDSDW. Basic and acidic residues predominate over residues 38-50; sequence RGDSKNLERDSDW. In terms of domain architecture, S5 DRBM spans 50-113; that stretch reads WQERVVQIRR…SDGKKNLVRV (64 aa).

This sequence belongs to the universal ribosomal protein uS5 family. Part of the 30S ribosomal subunit. Contacts proteins S4 and S8.

Its function is as follows. With S4 and S12 plays an important role in translational accuracy. Functionally, located at the back of the 30S subunit body where it stabilizes the conformation of the head with respect to the body. The protein is Small ribosomal subunit protein uS5 of Prochlorococcus marinus (strain MIT 9301).